Here is a 258-residue protein sequence, read N- to C-terminus: 5'-nucleotidase SurE (258 aa).

Residues aspartate 9, aspartate 10, serine 42, and asparagine 96 each coordinate a divalent metal cation.

Belongs to the SurE nucleotidase family. A divalent metal cation serves as cofactor.

It localises to the cytoplasm. The catalysed reaction is a ribonucleoside 5'-phosphate + H2O = a ribonucleoside + phosphate. Nucleotidase that shows phosphatase activity on nucleoside 5'-monophosphates. The sequence is that of 5'-nucleotidase SurE from Campylobacter jejuni subsp. doylei (strain ATCC BAA-1458 / RM4099 / 269.97).